The primary structure comprises 193 residues: Naphthalene 1,2-dioxygenase system, small oxygenase component (193 aa).

This sequence belongs to the bacterial ring-hydroxylating dioxygenase beta subunit family. The naphthalene dioxygenase (NDO) multicomponent enzyme system is composed of an electron transfer component and a dioxygenase component (iron sulfur protein (ISP)). The electron transfer component is composed of a ferredoxin reductase (NdoR) and a ferredoxin (NdoA), and the dioxygenase component is formed of a heterohexamer (trimer of heterodimers) of three large alpha subunits (NdoB) and three small beta subunits (NdoC).

It functions in the pathway aromatic compound metabolism; naphthalene degradation. In terms of biological role, component of the naphthalene dioxygenase (NDO) multicomponent enzyme system which catalyzes the incorporation of both atoms of molecular oxygen into naphthalene to form cis-(1R,2S)-dihydroxy-1,2-dihydronaphthalene. The beta subunit seems to have a structural role in the holoenzyme. The protein is Naphthalene 1,2-dioxygenase system, small oxygenase component of Pseudomonas aeruginosa.